Consider the following 684-residue polypeptide: Suppressor of presenilin protein 3 (684 aa).

C2H2-type zinc fingers lie at residues 21–43 (YKCHLCGQCFYRGCGLASHLRRH), 48–71 (FDCEHCAYTCKHKYAYDRHLLQSH), 123–145 (YKCPLCISTFGSHARAVYHILSH), 261–283 (YLCRNCPYVSWNVSSLWRHFRHH), and 291–313 (WTCIACSYSSSSRVKIDLHVKMH). Disordered regions lie at residues 337 to 359 (DLNKPTNKKKKPDGGNGSNHSDM), 419 to 440 (KNNSNPTVLPNKRNSIKTSKSD), and 469 to 501 (TSKFYRPESPDSLASNNSAHGDEIESTSSDQFQ). 2 C2H2-type zinc fingers span residues 590-612 (RECTDCPFKHNDLQQFRLHRDKH) and 618-641 (HTCPECNYSSNNHNQVVEHTFVDH). The segment at 652 to 684 (LPSSDSEDDNIPVPPDTPQRKKKAPKRGKRRGW) is disordered. The segment covering 671–684 (RKKKAPKRGKRRGW) has biased composition (basic residues).

Its subcellular location is the nucleus. Probable transcriptional regulator, which participates in the transcriptional repression of the presenilin protein hop-1. The chain is Suppressor of presenilin protein 3 (spr-3) from Caenorhabditis elegans.